Reading from the N-terminus, the 363-residue chain is Beta-1,3-N-acetylglucosaminyltransferase lunatic fringe (363 aa).

Over 1–8 (MLKSCGRK) the chain is Cytoplasmic. The helical; Signal-anchor for type II membrane protein transmembrane segment at 9–29 (LLLSLVGSMFTCLLVLMVEPP) threads the bilayer. The Lumenal segment spans residues 30 to 363 (GRPGLARGEA…TPWCPSNVVY (334 aa)). Arg-113 serves as a coordination point for substrate. The N-linked (GlcNAc...) asparagine glycan is linked to Asn-151. 2 cysteine pairs are disulfide-bonded: Cys-152/Cys-163 and Cys-181/Cys-244. Asp-185 provides a ligand contact to substrate. Asp-186 contributes to the Mn(2+) binding site. Asp-274 is an active-site residue. Residue His-298 coordinates Mn(2+). A disulfide bond links Cys-348 and Cys-357.

This sequence belongs to the glycosyltransferase 31 family. The cofactor is Mn(2+). Co(2+) is required as a cofactor. A soluble form may be derived from the membrane form by proteolytic processing.

The protein resides in the golgi apparatus membrane. The enzyme catalyses 3-O-(alpha-L-fucosyl)-L-threonyl-[EGF-like domain protein] + UDP-N-acetyl-alpha-D-glucosamine = 3-O-(N-acetyl-beta-D-glucosaminyl-(1-&gt;3)-alpha-L-fucosyl)-L-threonyl-[EGF-like domain protein] + UDP + H(+). It catalyses the reaction 3-O-(alpha-L-fucosyl)-L-seryl-[EGF-like domain protein] + UDP-N-acetyl-alpha-D-glucosamine = 3-O-(N-acetyl-beta-D-glucosaminyl-(1-&gt;3)-alpha-L-fucosyl)-L-seryl-[EGF-like domain protein] + UDP + H(+). In terms of biological role, glycosyltransferase that initiates the elongation of O-linked fucose residues attached to EGF-like repeats in the extracellular domain of Notch molecules. Essential mediator of somite segmentation and patterning. This is Beta-1,3-N-acetylglucosaminyltransferase lunatic fringe (LFNG) from Gallus gallus (Chicken).